The following is a 126-amino-acid chain: Large ribosomal subunit protein bL12 (126 aa).

Belongs to the bacterial ribosomal protein bL12 family. Homodimer. Part of the ribosomal stalk of the 50S ribosomal subunit. Forms a multimeric L10(L12)X complex, where L10 forms an elongated spine to which 2 to 4 L12 dimers bind in a sequential fashion. Binds GTP-bound translation factors.

Forms part of the ribosomal stalk which helps the ribosome interact with GTP-bound translation factors. Is thus essential for accurate translation. The polypeptide is Large ribosomal subunit protein bL12 (Citrifermentans bemidjiense (strain ATCC BAA-1014 / DSM 16622 / JCM 12645 / Bem) (Geobacter bemidjiensis)).